A 372-amino-acid polypeptide reads, in one-letter code: N-methyl-L-tryptophan oxidase (372 aa).

4 to 34 (DLIIIGSGSVGAAAGYYATRAGLKVLMTDAH) provides a ligand contact to FAD. S-8alpha-FAD cysteine is present on Cys-307.

Belongs to the MSOX/MTOX family. MTOX subfamily. In terms of assembly, monomer. Requires FAD as cofactor.

The catalysed reaction is N(alpha)-methyl-L-tryptophan + O2 + H2O = L-tryptophan + formaldehyde + H2O2. Catalyzes the oxidative demethylation of N-methyl-L-tryptophan. The chain is N-methyl-L-tryptophan oxidase from Salmonella arizonae (strain ATCC BAA-731 / CDC346-86 / RSK2980).